Here is a 121-residue protein sequence, read N- to C-terminus: Small ribosomal subunit protein uS13 (121 aa).

The segment at Arg-99–Lys-121 is disordered. Positions Gln-101–Lys-121 are enriched in basic residues.

Belongs to the universal ribosomal protein uS13 family. In terms of assembly, part of the 30S ribosomal subunit. Forms a loose heterodimer with protein S19. Forms two bridges to the 50S subunit in the 70S ribosome.

Its function is as follows. Located at the top of the head of the 30S subunit, it contacts several helices of the 16S rRNA. In the 70S ribosome it contacts the 23S rRNA (bridge B1a) and protein L5 of the 50S subunit (bridge B1b), connecting the 2 subunits; these bridges are implicated in subunit movement. Contacts the tRNAs in the A and P-sites. The chain is Small ribosomal subunit protein uS13 from Thermodesulfovibrio yellowstonii (strain ATCC 51303 / DSM 11347 / YP87).